The following is a 160-amino-acid chain: SsrA-binding protein (160 aa).

Belongs to the SmpB family.

Its subcellular location is the cytoplasm. Functionally, required for rescue of stalled ribosomes mediated by trans-translation. Binds to transfer-messenger RNA (tmRNA), required for stable association of tmRNA with ribosomes. tmRNA and SmpB together mimic tRNA shape, replacing the anticodon stem-loop with SmpB. tmRNA is encoded by the ssrA gene; the 2 termini fold to resemble tRNA(Ala) and it encodes a 'tag peptide', a short internal open reading frame. During trans-translation Ala-aminoacylated tmRNA acts like a tRNA, entering the A-site of stalled ribosomes, displacing the stalled mRNA. The ribosome then switches to translate the ORF on the tmRNA; the nascent peptide is terminated with the 'tag peptide' encoded by the tmRNA and targeted for degradation. The ribosome is freed to recommence translation, which seems to be the essential function of trans-translation. In Mycobacterium leprae (strain Br4923), this protein is SsrA-binding protein.